A 340-amino-acid chain; its full sequence is UPF0324 membrane protein BA_5405/GBAA_5405/BAS5024 (340 aa).

10 helical membrane passes run 13–35 (FGFS…LAEL), 40–59 (IMGQ…AAIG), 99–118 (VLVI…YGLT), 128–150 (GILT…APQV), 157–179 (TAVG…TLLY), 189–211 (YGVF…APGG), 218–240 (AVIV…GVWF), 255–277 (LPIP…GIIP), 279–301 (VVAG…GLGL), and 316–338 (FVAG…YALG).

It belongs to the UPF0324 family.

It is found in the cell membrane. The polypeptide is UPF0324 membrane protein BA_5405/GBAA_5405/BAS5024 (Bacillus anthracis).